A 182-amino-acid chain; its full sequence is Protein YIPF6 homolog (182 aa).

The Cytoplasmic segment spans residues 1-45 (MIESENPNTLDEPVIQTILRDLKMIGFKLYHVILPRGNAANVLRD). The chain crosses the membrane as a helical span at residues 46–66 (WDLWGPLILCLVMAIFLSISA). Residues 67–70 (EEQK) lie on the Lumenal side of the membrane. Residues 71–91 (ALEFTIVFVVVWCGAAIVTVN) form a helical membrane-spanning segment. The Cytoplasmic portion of the chain corresponds to 92–104 (GQLLCGNISFFQS). Residues 105–125 (VCILGYCIFPLTIATIIIWII) form a helical membrane-spanning segment. The Lumenal segment spans residues 126-133 (QNFTMIVK). The chain crosses the membrane as a helical span at residues 134–154 (LPIVGGAWFWSSFASYGFLGS). Over 155–161 (SVPESRR) the chain is Cytoplasmic. The chain crosses the membrane as a helical span at residues 162-182 (LLAVYPVLLFYLVIAWLVVVQ).

This sequence belongs to the YIP1 family.

The protein resides in the golgi apparatus membrane. In Dictyostelium discoideum (Social amoeba), this protein is Protein YIPF6 homolog (yipf6).